A 98-amino-acid chain; its full sequence is ESAT-6-like protein EsxJ (98 aa).

It belongs to the WXG100 family. CFP-10 subfamily.

It is found in the secreted. The chain is ESAT-6-like protein EsxJ from Mycobacterium bovis (strain ATCC BAA-935 / AF2122/97).